A 430-amino-acid polypeptide reads, in one-letter code: MTVTLPKGVFDIFPYLADAKQLWRHTSLWHSVEKAIHTVCMLYGFCEIRTPIFEKSEVFLHVGEESDVVKKEVYSFLDRKGRSMTLRPEGTAAVVRSFLEHGASHRSDNKFYYILPMFRYERQQAGRYRQHHQFGVEAIGVRHPLRDAEVLALLWDFYSRVGLQHMQIQLNFLGGSETRFRYDKVLRAYLKESMGELSALSQQRFSTNVLRILDSKEPEDQEIIRQAPPILDYVSDEDLKYFNEILDALRVLEIPYAINPRLVRGLDYYSDLVFEATTTFQEVSYALGGGGRYDGLISAFGGASLPACGFGVGLERAIQTLLAQKRIEPQFPHKLRLIPMEPDADQFCLEWSQHLRRLGIPTEVDWSHKKVKGALKAASTEQVSFVCLIGERELISQQLVIKNMSLRKEFFGTKEEVEQRLLYEIQNTPL.

Belongs to the class-II aminoacyl-tRNA synthetase family. Homodimer.

It localises to the cytoplasm. It carries out the reaction tRNA(His) + L-histidine + ATP = L-histidyl-tRNA(His) + AMP + diphosphate + H(+). The polypeptide is Histidine--tRNA ligase (hisS) (Chlamydia pneumoniae (Chlamydophila pneumoniae)).